We begin with the raw amino-acid sequence, 353 residues long: Cruciform cutting endonuclease 1, mitochondrial (353 aa).

Mg(2+)-binding residues include Asp-293 and Asp-294.

Homodimer. It depends on Mg(2+) as a cofactor.

The protein resides in the mitochondrion. The catalysed reaction is Endonucleolytic cleavage at a junction such as a reciprocal single-stranded crossover between two homologous DNA duplexes (Holliday junction).. Its function is as follows. Capable of resolving Holliday junctions. Specific for 4-way junctions. Seems to be important for the maintenance of mitochondrial DNA. Cleaves fixed junctions at the point of strand exchange. Cleaves after 5'-CT-3' sequence. This chain is Cruciform cutting endonuclease 1, mitochondrial (CCE1), found in Saccharomyces cerevisiae (strain ATCC 204508 / S288c) (Baker's yeast).